Reading from the N-terminus, the 432-residue chain is Ribosomal protein uS12 methylthiotransferase RimO (432 aa).

The MTTase N-terminal domain occupies 2–115 (IRVAVITLGC…LPEIINRVLK (114 aa)). The [4Fe-4S] cluster site is built by Cys-11, Cys-47, Cys-78, Cys-151, Cys-155, and Cys-158. Positions 137-367 (EDGKPFAYLK…MLHQQSITRA (231 aa)) constitute a Radical SAM core domain.

Belongs to the methylthiotransferase family. RimO subfamily. [4Fe-4S] cluster serves as cofactor.

The protein localises to the cytoplasm. It carries out the reaction L-aspartate(89)-[ribosomal protein uS12]-hydrogen + (sulfur carrier)-SH + AH2 + 2 S-adenosyl-L-methionine = 3-methylsulfanyl-L-aspartate(89)-[ribosomal protein uS12]-hydrogen + (sulfur carrier)-H + 5'-deoxyadenosine + L-methionine + A + S-adenosyl-L-homocysteine + 2 H(+). Catalyzes the methylthiolation of an aspartic acid residue of ribosomal protein uS12. This is Ribosomal protein uS12 methylthiotransferase RimO from Moorella thermoacetica (strain ATCC 39073 / JCM 9320).